The sequence spans 193 residues: Peptidyl-tRNA hydrolase 1 (193 aa).

Tyrosine 27 contributes to the tRNA binding site. Histidine 32 (proton acceptor) is an active-site residue. The tRNA site is built by phenylalanine 80, asparagine 82, and asparagine 128.

The protein belongs to the PTH family. As to quaternary structure, monomer.

The protein localises to the cytoplasm. It catalyses the reaction an N-acyl-L-alpha-aminoacyl-tRNA + H2O = an N-acyl-L-amino acid + a tRNA + H(+). Its function is as follows. Hydrolyzes ribosome-free peptidyl-tRNAs (with 1 or more amino acids incorporated), which drop off the ribosome during protein synthesis, or as a result of ribosome stalling. Catalyzes the release of premature peptidyl moieties from peptidyl-tRNA molecules trapped in stalled 50S ribosomal subunits, and thus maintains levels of free tRNAs and 50S ribosomes. The sequence is that of Peptidyl-tRNA hydrolase 1 from Corynebacterium jeikeium (strain K411).